The primary structure comprises 346 residues: Fe(3+) ions import ATP-binding protein FbpC 2 (346 aa).

Residues 2–234 enclose the ABC transporter domain; the sequence is LELHRVSKSF…PNSEDIATFL (233 aa). ATP is bound at residue 34-41; that stretch reads GPSGSGKT.

The protein belongs to the ABC transporter superfamily. Fe(3+) ion importer (TC 3.A.1.10) family. The complex is composed of two ATP-binding proteins (FbpC), two transmembrane proteins (FbpB) and a solute-binding protein (FbpA).

Its subcellular location is the cell inner membrane. It carries out the reaction Fe(3+)(out) + ATP + H2O = Fe(3+)(in) + ADP + phosphate + H(+). In terms of biological role, part of the ABC transporter complex FbpABC involved in Fe(3+) ions import. Responsible for energy coupling to the transport system. This chain is Fe(3+) ions import ATP-binding protein FbpC 2, found in Pectobacterium atrosepticum (strain SCRI 1043 / ATCC BAA-672) (Erwinia carotovora subsp. atroseptica).